Consider the following 382-residue polypeptide: Draxin-A (382 aa).

The first 22 residues, 1 to 22, serve as a signal peptide directing secretion; that stretch reads MMSSSWCLPLALLFSTLAVSHS. 3 disordered regions span residues 28–213, 233–252, and 275–297; these read THAK…PPSP, LPTL…GKMQ, and VDAW…SGNV. The segment covering 73-82 has biased composition (low complexity); it reads RGAKASSGAG. Positions 139 to 149 are enriched in basic residues; sequence GPRKGRGQGHG. Residues 190-201 are compositionally biased toward low complexity; sequence SVSSAAAATSPS. A compositionally biased stretch (basic residues) spans 281–290; sequence SRKKDKRRSK. Asparagine 291 and asparagine 296 each carry an N-linked (GlcNAc...) asparagine glycan.

The protein belongs to the draxin family.

Its subcellular location is the secreted. Its function is as follows. Chemorepulsive axon guidance protein required for the development of spinal cord and forebrain commissures. Acts as a chemorepulsive guidance protein for commissural axons during development. Able to inhibit or repel neurite outgrowth from dorsal spinal cord. The sequence is that of Draxin-A (draxin-A) from Salmo salar (Atlantic salmon).